We begin with the raw amino-acid sequence, 104 residues long: uncharacterized protein (104 aa).

This is an uncharacterized protein from Schizosaccharomyces pombe (strain 972 / ATCC 24843) (Fission yeast).